A 559-amino-acid polypeptide reads, in one-letter code: ATP synthase subunit beta-3, mitochondrial (559 aa).

The segment covering 1-28 (MASRRILSSLLRSSSSRSTSKSSLIGSR) has biased composition (low complexity). A disordered region spans residues 1-39 (MASRRILSSLLRSSSSRSTSKSSLIGSRNPRLLSPGPAH). The transit peptide at 1-54 (MASRRILSSLLRSSSSRSTSKSSLIGSRNPRLLSPGPAHGAAPCGTLLGRVAEY) directs the protein to the mitochondrion. Ser62 bears the Phosphoserine mark. 234 to 241 (GGAGVGKT) is an ATP binding site.

It belongs to the ATPase alpha/beta chains family. In terms of assembly, F-type ATPases have 2 components, CF(1) - the catalytic core - and CF(0) - the membrane proton channel. CF(1) has five subunits: alpha(3), beta(3), gamma(1), delta(1), epsilon(1). CF(0) has three main subunits: a, b and c.

It is found in the mitochondrion. The protein resides in the mitochondrion inner membrane. The enzyme catalyses ATP + H2O + 4 H(+)(in) = ADP + phosphate + 5 H(+)(out). Mitochondrial membrane ATP synthase (F(1)F(0) ATP synthase or Complex V) produces ATP from ADP in the presence of a proton gradient across the membrane which is generated by electron transport complexes of the respiratory chain. F-type ATPases consist of two structural domains, F(1) - containing the extramembraneous catalytic core, and F(0) - containing the membrane proton channel, linked together by a central stalk and a peripheral stalk. During catalysis, ATP synthesis in the catalytic domain of F(1) is coupled via a rotary mechanism of the central stalk subunits to proton translocation. Subunits alpha and beta form the catalytic core in F(1). Rotation of the central stalk against the surrounding alpha(3)beta(3) subunits leads to hydrolysis of ATP in three separate catalytic sites on the beta subunits. The polypeptide is ATP synthase subunit beta-3, mitochondrial (Arabidopsis thaliana (Mouse-ear cress)).